Here is a 130-residue protein sequence, read N- to C-terminus: Albumin-1 F (130 aa).

Residues 1 to 26 form the signal peptide; sequence MASVKLASLIVLFATLGMFLTKNVGA. 3 cysteine pairs are disulfide-bonded: cysteine 29/cysteine 46, cysteine 33/cysteine 48, and cysteine 41/cysteine 58. 2 consecutive propeptides follow at residues 64–69 and 123–130; these read VFLRTN and LLKSVSTA.

In terms of processing, the C-terminal glycine may be removed from PA1b.

PA1b binds to basic 7S globulin (BG) and stimulates its phosphorylation activity. Involved in the signal transduction system to regulate the growth and differentiation as a hormone peptide. Toxic to various insects through binding to a high affinity binding site in the insect gut. This Pisum sativum (Garden pea) protein is Albumin-1 F.